The chain runs to 262 residues: Phosphate import ATP-binding protein PstB (262 aa).

The ABC transporter domain maps to 16-257 (IDVRNLNFYY…PHRKETEDYI (242 aa)). Residue 48 to 55 (GPSGCGKS) participates in ATP binding.

It belongs to the ABC transporter superfamily. Phosphate importer (TC 3.A.1.7) family. In terms of assembly, the complex is composed of two ATP-binding proteins (PstB), two transmembrane proteins (PstC and PstA) and a solute-binding protein (PstS).

The protein resides in the cell inner membrane. It catalyses the reaction phosphate(out) + ATP + H2O = ADP + 2 phosphate(in) + H(+). Part of the ABC transporter complex PstSACB involved in phosphate import. Responsible for energy coupling to the transport system. This Cupriavidus metallidurans (strain ATCC 43123 / DSM 2839 / NBRC 102507 / CH34) (Ralstonia metallidurans) protein is Phosphate import ATP-binding protein PstB.